The chain runs to 302 residues: Ribosome-binding factor PSRP1, chloroplastic (302 aa).

Residues 1-66 (MATLCTSAIN…SRNKPNVVCM (66 aa)) constitute a chloroplast transit peptide.

As to quaternary structure, binds to the mRNA channel of the chloroplast small ribosomal subunit and interacts with 16S sRNA nucleotides at the A-site and P-site.

Its subcellular location is the plastid. It localises to the chloroplast stroma. Ribosome-binding factor involved in light- and temperature-dependent control of protein synthesis. Interacts with 16S sRNA nucleotides at the A-site and P-site, where it protects the decoding center and inhibits translation by preventing tRNA binding. Stabilizes 70S ribosomes against dissociation. May be recycled by the combined action of ribosome-recycling factor (RRF) and EF-G. This chain is Ribosome-binding factor PSRP1, chloroplastic (PSRP1), found in Spinacia oleracea (Spinach).